The sequence spans 362 residues: 3-dehydroquinate synthase (362 aa).

NAD(+) contacts are provided by residues 71–76 (DGEQYK), 105–109 (GVVGD), 129–130 (TT), Lys142, Lys151, and 169–172 (CLKT). Zn(2+) is bound by residues Glu184, His247, and His264.

This sequence belongs to the sugar phosphate cyclases superfamily. Dehydroquinate synthase family. Co(2+) is required as a cofactor. Zn(2+) serves as cofactor. The cofactor is NAD(+).

It is found in the cytoplasm. It catalyses the reaction 7-phospho-2-dehydro-3-deoxy-D-arabino-heptonate = 3-dehydroquinate + phosphate. It functions in the pathway metabolic intermediate biosynthesis; chorismate biosynthesis; chorismate from D-erythrose 4-phosphate and phosphoenolpyruvate: step 2/7. Catalyzes the conversion of 3-deoxy-D-arabino-heptulosonate 7-phosphate (DAHP) to dehydroquinate (DHQ). The polypeptide is 3-dehydroquinate synthase (Escherichia coli O81 (strain ED1a)).